The sequence spans 365 residues: Chorismate synthase (365 aa).

The segment covering 41–51 (IQKELDRRRPG) has biased composition (basic and acidic residues). The disordered stretch occupies residues 41-62 (IQKELDRRRPGQSEVSTPRSEA). Arginine 48 is an NADP(+) binding site. Residues 125-127 (RSS), glycine 285, 300-304 (KPTPS), and arginine 327 each bind FMN.

Belongs to the chorismate synthase family. The cofactor is FMNH2.

It catalyses the reaction 5-O-(1-carboxyvinyl)-3-phosphoshikimate = chorismate + phosphate. Its pathway is metabolic intermediate biosynthesis; chorismate biosynthesis; chorismate from D-erythrose 4-phosphate and phosphoenolpyruvate: step 7/7. Catalyzes the anti-1,4-elimination of the C-3 phosphate and the C-6 proR hydrogen from 5-enolpyruvylshikimate-3-phosphate (EPSP) to yield chorismate, which is the branch point compound that serves as the starting substrate for the three terminal pathways of aromatic amino acid biosynthesis. This reaction introduces a second double bond into the aromatic ring system. The chain is Chorismate synthase from Methanosarcina acetivorans (strain ATCC 35395 / DSM 2834 / JCM 12185 / C2A).